Here is a 562-residue protein sequence, read N- to C-terminus: Long-chain-fatty-acid--CoA ligase (562 aa).

ATP is bound at residue 213 to 224; the sequence is YTGGTTGVAKGA.

The protein belongs to the ATP-dependent AMP-binding enzyme family. The cofactor is Mg(2+).

It localises to the membrane. It catalyses the reaction a long-chain fatty acid + ATP + CoA = a long-chain fatty acyl-CoA + AMP + diphosphate. It participates in lipid metabolism; fatty acid beta-oxidation. In terms of biological role, catalyzes the esterification, concomitant with transport, of exogenous long-chain fatty acids into metabolically active CoA thioesters for subsequent degradation or incorporation into phospholipids. This chain is Long-chain-fatty-acid--CoA ligase (fadD), found in Yersinia pestis.